We begin with the raw amino-acid sequence, 451 residues long: Chaperone SurA (451 aa).

Residues 1–26 form the signal peptide; sequence MKKIIPTNLFKLISILFILTPFFAWS. PpiC domains are found at residues 179–280 and 290–388; these read DVEY…QLQG and KQYH…FLDG.

The protein resides in the periplasm. It carries out the reaction [protein]-peptidylproline (omega=180) = [protein]-peptidylproline (omega=0). Chaperone involved in the correct folding and assembly of outer membrane proteins. Recognizes specific patterns of aromatic residues and the orientation of their side chains, which are found more frequently in integral outer membrane proteins. May act in both early periplasmic and late outer membrane-associated steps of protein maturation. The sequence is that of Chaperone SurA from Hydrogenovibrio crunogenus (strain DSM 25203 / XCL-2) (Thiomicrospira crunogena).